Reading from the N-terminus, the 340-residue chain is Cell growth-regulated gene 1 protein (340 aa).

This sequence belongs to the SMP-30/CGR1 family.

Functionally, involved in the cell growth regulation. The sequence is that of Cell growth-regulated gene 1 protein (CGR1) from Candida albicans (strain SC5314 / ATCC MYA-2876) (Yeast).